The primary structure comprises 3767 residues: Transmembrane cell adhesion receptor mua-3 (3767 aa).

The signal sequence occupies residues 1 to 24; it reads MQAGISIFFLFLHIPIFFVNCSNS. Residues 25 to 3417 lie on the Extracellular side of the membrane; the sequence is TSCVAREEFQ…CQVAPSNASL (3393 aa). The 38-residue stretch at 26–63 folds into the LDL-receptor class A 1 domain; sequence SCVAREEFQCKMDDSCISMKKWQDGVDDCYDGSDEVCL. Disulfide bonds link Cys-27-Cys-41, Cys-35-Cys-54, Cys-62-Cys-76, Cys-69-Cys-89, Cys-97-Cys-110, Cys-104-Cys-123, Cys-131-Cys-144, Cys-138-Cys-157, Cys-165-Cys-179, and Cys-172-Cys-192. 3 consecutive LDL-receptor class A domains span residues 96–132, 133–166, and 167–209; these read GCPA…EPCA, QNQF…EECT, and TSQF…ANCT. N-linked (GlcNAc...) asparagine glycosylation is found at Asn-201 and Asn-207. EGF-like domains are found at residues 225-268, 375-416, 418-466, 468-517, 519-566, 614-663, 665-713, 714-760, 762-810, 816-860, 861-908, 910-961, 963-1012, 1029-1070, 1071-1118, 1120-1168, and 1170-1219; these read KLKF…DKCI, NRDD…GTCR, LIDE…RKCR, LINE…RNCT, AINE…RKCV, RANP…RKCV, AVDE…RSCK, KADM…RVCR, VVNE…KNCV, DPPE…GRCV, VINE…RICR, RVNE…RRCI, AVNE…RICT, TDDG…GSCR, VYSA…RICK, LINE…RQCT, and SNNE…RVCT. 51 cysteine pairs are disulfide-bonded: Cys-229–Cys-243, Cys-235–Cys-252, Cys-254–Cys-267, Cys-381–Cys-392, Cys-386–Cys-402, Cys-404–Cys-415, Cys-422–Cys-435, Cys-429–Cys-444, Cys-446–Cys-465, Cys-472–Cys-486, Cys-480–Cys-495, Cys-497–Cys-516, Cys-523–Cys-536, Cys-530–Cys-545, Cys-547–Cys-565, Cys-618–Cys-632, Cys-626–Cys-642, Cys-644–Cys-662, Cys-669–Cys-682, Cys-676–Cys-691, Cys-693–Cys-712, Cys-718–Cys-729, Cys-723–Cys-738, Cys-740–Cys-759, Cys-766–Cys-779, Cys-773–Cys-788, Cys-790–Cys-809, Cys-820–Cys-836, Cys-828–Cys-845, Cys-847–Cys-859, Cys-865–Cys-879, Cys-873–Cys-888, Cys-890–Cys-907, Cys-914–Cys-930, Cys-924–Cys-939, Cys-941–Cys-960, Cys-967–Cys-981, Cys-975–Cys-990, Cys-992–Cys-1011, Cys-1033–Cys-1046, Cys-1040–Cys-1055, Cys-1057–Cys-1069, Cys-1075–Cys-1087, Cys-1081–Cys-1096, Cys-1098–Cys-1117, Cys-1124–Cys-1137, Cys-1131–Cys-1146, Cys-1148–Cys-1167, Cys-1174–Cys-1188, Cys-1182–Cys-1197, and Cys-1199–Cys-1218. An N-linked (GlcNAc...) asparagine glycan is attached at Asn-383. Residue Asn-515 is glycosylated (N-linked (GlcNAc...) asparagine). Residues 1230-1406 form the VWFA domain; sequence DLVFLIDGSG…DLDTRLRSMI (177 aa). An N-linked (GlcNAc...) asparagine glycan is attached at Asn-1350. EGF-like domains are found at residues 1421–1466, 1466–1510, 1521–1562, 1563–1608, 1608–1656, 1658–1706, 1708–1755, 1759–1807, 1809–1860, 1862–1911, 1913–1961, 1963–2011, 2014–2062, 2068–2112, 2113–2160, 2162–2208, 2210–2258, 2260–2308, 2310–2358, 2360–2408, 2409–2455, 2456–2504, 2513–2563, 2565–2616, 2618–2666, 2668–2714, 2716–2763, 2763–2811, and 2833–2872; these read SEDV…RVCG, GGDL…GFCV, HDAN…GQCA, YPGS…DICL, LKNE…RVCV, LQNE…MVCK, LVNE…RRCE, TNDK…RLCI, VIPE…RLCK, LQNE…RKCK, LINE…RRCL, RINE…RICR, LVDE…RLCQ, PPPE…GSCS, IINE…RMCK, MVNE…RICK, LTNE…RACR, LVNE…RVCL, FINE…RVCV, LVDE…RVCS, APEV…RVCV, RNNA…RVCE, PRHP…RLCV, TEPV…RICK, LINE…RICS, SVNE…HRCS, MINE…RICR, RLNE…RICI, and REFP…GKCQ. 66 disulfides stabilise this stretch: Cys-1425–Cys-1441, Cys-1433–Cys-1450, Cys-1452–Cys-1465, Cys-1470–Cys-1484, Cys-1478–Cys-1494, Cys-1496–Cys-1509, Cys-1525–Cys-1538, Cys-1532–Cys-1547, Cys-1549–Cys-1561, Cys-1567–Cys-1583, Cys-1575–Cys-1592, Cys-1594–Cys-1607, Cys-1612–Cys-1625, Cys-1619–Cys-1634, Cys-1636–Cys-1655, Cys-1662–Cys-1675, Cys-1669–Cys-1684, Cys-1686–Cys-1705, Cys-1712–Cys-1726, Cys-1720–Cys-1735, Cys-1737–Cys-1754, Cys-1763–Cys-1776, Cys-1770–Cys-1786, Cys-1788–Cys-1806, Cys-1813–Cys-1829, Cys-1821–Cys-1838, Cys-1840–Cys-1859, Cys-1866–Cys-1880, Cys-1873–Cys-1889, Cys-1891–Cys-1910, Cys-1917–Cys-1930, Cys-1924–Cys-1939, Cys-1941–Cys-1960, Cys-1967–Cys-1980, Cys-1974–Cys-1989, Cys-1991–Cys-2010, Cys-2018–Cys-2031, Cys-2025–Cys-2040, Cys-2042–Cys-2061, Cys-2072–Cys-2088, Cys-2080–Cys-2097, Cys-2099–Cys-2111, Cys-2117–Cys-2131, Cys-2125–Cys-2140, Cys-2142–Cys-2159, Cys-2166–Cys-2180, Cys-2174–Cys-2189, Cys-2191–Cys-2207, Cys-2214–Cys-2228, Cys-2222–Cys-2237, Cys-2239–Cys-2257, Cys-2264–Cys-2278, Cys-2272–Cys-2287, Cys-2289–Cys-2307, Cys-2314–Cys-2327, Cys-2321–Cys-2336, Cys-2338–Cys-2357, Cys-2364–Cys-2377, Cys-2371–Cys-2386, Cys-2388–Cys-2407, Cys-2413–Cys-2425, Cys-2419–Cys-2435, Cys-2437–Cys-2454, Cys-2460–Cys-2474, Cys-2468–Cys-2483, and Cys-2485–Cys-2503. The segment at 2492 to 2521 is disordered; sequence RSPDSSQRGRVCEPPPPPSPPPRHPCQDPE. The segment covering 2504-2515 has biased composition (pro residues); it reads EPPPPPSPPPRH. Intrachain disulfides connect Cys-2517–Cys-2531, Cys-2525–Cys-2541, Cys-2543–Cys-2562, Cys-2569–Cys-2583, Cys-2577–Cys-2594, Cys-2596–Cys-2615, Cys-2622–Cys-2636, Cys-2630–Cys-2645, Cys-2647–Cys-2665, Cys-2672–Cys-2686, Cys-2680–Cys-2695, Cys-2697–Cys-2713, Cys-2720–Cys-2734, Cys-2728–Cys-2743, Cys-2745–Cys-2762, Cys-2767–Cys-2781, Cys-2775–Cys-2790, Cys-2792–Cys-2810, Cys-2837–Cys-2850, Cys-2842–Cys-2856, and Cys-2858–Cys-2871. An SEA 1 domain is found at 2873-2999; sequence EVQETPFELR…GSLRVASDTD (127 aa). A glycan (N-linked (GlcNAc...) asparagine) is linked at Asn-2944. The region spanning 3009 to 3048 is the EGF-like 47 domain; it reads EWGNCGGMSCKEHLKEVCIAGHICGCPDGMKRRDANSECR. Intrachain disulfides connect Cys-3013-Cys-3026, Cys-3018-Cys-3032, and Cys-3034-Cys-3047. One can recognise an SEA 2 domain in the interval 3049-3174; it reads VVESWNVPLW…SELYLNPTQP (126 aa). N-linked (GlcNAc...) asparagine glycans are attached at residues Asn-3120 and Asn-3130. 3 EGF-like domains span residues 3176-3220, 3224-3272, and 3272-3324; these read PFNP…KKCL, GFNE…SLCV, and VLDY…TLCM. 15 disulfides stabilise this stretch: Cys-3180-Cys-3191, Cys-3185-Cys-3201, Cys-3203-Cys-3219, Cys-3228-Cys-3242, Cys-3236-Cys-3251, Cys-3253-Cys-3271, Cys-3276-Cys-3288, Cys-3282-Cys-3297, Cys-3299-Cys-3323, Cys-3332-Cys-3345, Cys-3339-Cys-3354, Cys-3356-Cys-3372, Cys-3377-Cys-3386, Cys-3380-Cys-3397, and Cys-3399-Cys-3408. N-linked (GlcNAc...) asparagine glycosylation is present at Asn-3285. The region spanning 3328–3373 is the EGF-like 51; calcium-binding domain; that stretch reads DVDECALGLNNCSGVAHCIDRAVGYTCKCPDGYIDGNPDEPGRVCG. An N-linked (GlcNAc...) asparagine; atypical glycan is attached at Asn-3337. Asn-3338 carries N-linked (GlcNAc...) asparagine glycosylation. Positions 3373 to 3409 constitute an EGF-like 52 domain; sequence GALLCDLCNAHGDCVHNTATNNITCVCTDGWTGPQCQ. A glycan (N-linked (GlcNAc...) asparagine) is linked at Asn-3394. An N-linked (GlcNAc...) asparagine glycan is attached at Asn-3414. A helical membrane pass occupies residues 3418–3438; the sequence is VLLILLALLFLLLTLCCLLYF. Topologically, residues 3439 to 3767 are cytoplasmic; the sequence is CTKCHCFKGR…SQTSTHVTKK (329 aa). The interval 3582–3729 is disordered; that stretch reads TTTTDEQGNT…EEDVEHSVGD (148 aa). Residues 3588–3597 are compositionally biased toward polar residues; it reads QGNTIVTTTE. Over residues 3630-3665 the composition is skewed to low complexity; that stretch reads QSQSQQQQSMSQGMSQSMSQHATSAGYSSSGMESSA. Basic and acidic residues predominate over residues 3675-3684; sequence HTGERERGGS. The segment covering 3690–3702 has biased composition (low complexity); that stretch reads IGRARGMAAASSG.

In terms of tissue distribution, expressed in the hypodermis at the sites of muscle contact, in striated muscles including body wall muscles, the anal sphincter muscles and the junctions between the anal sphincter muscle and rectal cuticle. Also expressed in non-muscle cells including the excretory duct cell and pore cells.

It is found in the cell membrane. The protein localises to the cell junction. The protein resides in the hemidesmosome. In terms of biological role, involved in cell adhesion and required for organ positioning and attachment. At the hypodermal surface, required for attachment of the hypdermermis to the basal cuticle in postembryonic development, possibly through intermediate filaments of the cytoskeleton. This Caenorhabditis elegans protein is Transmembrane cell adhesion receptor mua-3.